The chain runs to 156 residues: Aspercryptin biosynthesis cluster protein B (156 aa).

Residues 1–39 (MRMANRIGAGRKSALQLSHLRTRLTSSAAAVATAPTLDP) form the signal peptide.

The protein belongs to the YciI family.

The protein operates within secondary metabolite biosynthesis. Functionally, part of the gene cluster that mediates the biosynthesis of aspercryptins, linear lipopeptides built from six amino acids including 2 highly unusual and nonproteogenic amino acids, 2-amino-octanoic acid (2aoa) and 2-amino-dodecanol (2adol). The core structure of aspercryptins is as follows: Ser/Ala-Thr-Ile/Val-2aoa-Aasn-2adol. The first step of aspercryptin biosynthesis is the generation of the fatty acid precursors, octanoic and dodecanoic acids, by the FAS subunits atnF and atnM. The fatty acid precursors are likely transformed into the corresponding alpha-amino fatty acids in three steps. First, they are hydroxylated by the cytochrome P450 monooxygenase atnE, then oxidized to the corresponding alpha-keto acids by the NAD(P)-dependent oxidoreductase atnD, and finally converted to the alpha-amino fatty acids by the PLP-dependent aminotransferases atnH or atnJ. the alpha-amino fatty acids, 2-amino-octanoic and 2-amino-dodecanoic acids, are recognized, activated, and covalently tethered to the NRPS atnA by its fourth and sixth adenylation domains. The second module of atnA is the Thr module and contains an epimerase (E) domain responsible for the epimerization of Thr to D-allo-Thr. Additionally, despite atnA having only one epimerase domain, the first amino acid of aspercryptin A1 is D-Ser, suggesting that serine is either loaded directly as D-Ser on the first module or that the epimerase domain in the threonine module epimerizes both L-Ser and L-Thr. After condensation of the hexapeptide of aspercryptin, the C-terminal reductase (TE) domain might be involved in the reductive release and production of the aldehyde hexapeptide. Further reduction would generate aspercryptins. The variety of aspercryptins produced reflects the flexibility of the atnA NRPS, allowing incorporation of alanine instead of serine, valine for isoleucine, and a C10 fatty amino alcohol instead of the C12 version. AtnB seems to be involved in the selectivity for Ile versus Val by the third module. Moreover, type B, C and D aspercryptins have an additional N-terminal cichorine, acetyl and propionyl group respectively. In Emericella nidulans (strain FGSC A4 / ATCC 38163 / CBS 112.46 / NRRL 194 / M139) (Aspergillus nidulans), this protein is Aspercryptin biosynthesis cluster protein B.